A 507-amino-acid polypeptide reads, in one-letter code: Protein adenylyltransferase fic-1 (507 aa).

Residues 40-56 form a helical membrane-spanning segment; that stretch reads YSLTTVVLVSLVVTLVC. TPR repeat units lie at residues 146 to 179 and 180 to 213; these read AILA…APNN and PQIL…DPGN. Positions 269–274 match the Inhibitory (S/T)XXXE(G/N) motif motif; sequence TVAIEG. Residue Glu-273 participates in ATP binding. A Fido domain is found at 325 to 460; it reads ISIDDILEMH…LRPFVRYVAK (136 aa). At Thr-351 the chain carries O-AMP-threonine; by autocatalysis. 356–359 lines the ATP pocket; the sequence is VGKF. His-403 is an active-site residue. ATP contacts are provided by residues 407-414, 439-440, and Asn-447; these read DGNGRTAR and YY. Thr-475 carries the O-AMP-threonine; by autocatalysis modification. A disordered region spans residues 482 to 507; the sequence is NGEEPNLTAEESKVSEKIETECRAGS. A compositionally biased stretch (basic and acidic residues) spans 491 to 507; sequence EESKVSEKIETECRAGS.

This sequence belongs to the fic family. Forms homodimers; homodimerization might be required for adenylyltransferase activity.

It localises to the endoplasmic reticulum membrane. It is found in the nucleus membrane. The catalysed reaction is L-tyrosyl-[protein] + ATP = O-(5'-adenylyl)-L-tyrosyl-[protein] + diphosphate. The enzyme catalyses L-threonyl-[protein] + ATP = 3-O-(5'-adenylyl)-L-threonyl-[protein] + diphosphate. It carries out the reaction 3-O-(5'-adenylyl)-L-threonyl-[protein] + H2O = L-threonyl-[protein] + AMP + H(+). With respect to regulation, the side chain of Glu-273 determines which of the two opposing activities (AMPylase or de-AMPylase) will take place. In response to endoplasmic reticulum stress, mediates de-AMPylase activity. Adenylyltransferase activity is inhibited by the inhibitory helix present at the N-terminus: Glu-273 binds ATP and competes with ATP-binding at Arg-414, thereby preventing adenylyltransferase activity. In unstressed cells, disengagement of Glu-273 promotes adenylyltransferase activity. Activation dissociates ATP-binding from Glu-273, allowing ordered binding of the entire ATP moiety with the alpha-phosphate in an orientation that is productive for accepting an incoming target hydroxyl side chain. Protein that can both mediate the addition of adenosine 5'-monophosphate (AMP) to specific residues of target proteins (AMPylation), and the removal of the same modification from target proteins (de-AMPylation), depending on the context. The side chain of Glu-273 determines which of the two opposing activities (AMPylase or de-AMPylase) will take place. Adenylyltransferase that mediates the addition of adenosine 5'-monophosphate (AMP) to specific residues of target proteins. In vivo target proteins include the heat-shock 70 family proteins hsp-1 and hsp-3 and the translation elongation factors eef-1A, eef-1G and eef-2. Can AMPylate core histone H3 in vitro. Can also act as a phosphodiesterase by mediating removal of ATP (de-AMPylation) from target proteins. Decreases susceptibility to P.aeruginosa-mediated killing and might therefore play a role in the innate immune response. In Caenorhabditis briggsae, this protein is Protein adenylyltransferase fic-1 (fic-1).